The following is a 530-amino-acid chain: Membrane-associated transporter protein (530 aa).

Residues 1–46 (MGSNSGQAGRHIYKSLADDGPFDSVEPPKRPTSRLIMHSMAMFGRE) are Cytoplasmic-facing. A helical membrane pass occupies residues 47–67 (FCYAVEAAYVTPVLLSVGLPS). A topological domain (extracellular) is located at residue Ser-68. Residues 69–89 (LYSIVWFLSPILGFLLQPVVG) form a helical membrane-spanning segment. At 90 to 110 (SASDHCRSRWGRRRPYILTLG) the chain is on the cytoplasmic side. The helical transmembrane segment at 111–131 (VMMLVGMALYLNGATVVAALI) threads the bilayer. Residues 132-138 (ANPRRKL) are Extracellular-facing. Residues 139–159 (VWAISVTMIGVVLFDFAADFI) traverse the membrane as a helical segment. Topologically, residues 160 to 184 (DGPIKAYLFDVCSHQDKEKGLHYHA) are cytoplasmic. A helical transmembrane segment spans residues 185–205 (LFTGFGGALGYLLGAIDWAHL). At 206–216 (ELGRLLGTEFQ) the chain is on the extracellular side. Residues 217 to 237 (VMFFFSALVLTLCFTVHLCSI) traverse the membrane as a helical segment. Over 238–318 (SEAPLTEVAK…ALVNMPPHYR (81 aa)) the chain is Cytoplasmic. A helical transmembrane segment spans residues 319–339 (YLCISHLIGWTAFLSNMLFFT). The Extracellular segment spans residues 340–366 (DFMGQIVYRGDPYSAHNSTEFLIYERG). The N-linked (GlcNAc...) asparagine glycan is linked to Asn-356. A helical membrane pass occupies residues 367 to 387 (VEVGCWGLCINSVFSSLYSYF). The Cytoplasmic portion of the chain corresponds to 388–398 (QKVLVSYIGLK). The chain crosses the membrane as a helical span at residues 399–419 (GLYFTGYLLFGLGTGFIGLFP). Residues 420-425 (NVYSTL) are Extracellular-facing. A helical transmembrane segment spans residues 426-446 (VLCSLFGVMSSTLYTVPFNLI). Residues 447–477 (TEYHREEEKERQQAPGGDPDNSVRGKGMDCA) lie on the Cytoplasmic side of the membrane. A helical membrane pass occupies residues 478–498 (TLTCMVQLAQILVGGGLGFLV). Residues 499-504 (NTAGTV) are Extracellular-facing. The helical transmembrane segment at 505–525 (VVVVITASAVALIGCCFVALF) threads the bilayer. At 526 to 530 (VRYVD) the chain is on the cytoplasmic side.

This sequence belongs to the glycoside-pentoside-hexuronide (GPH) cation symporter transporter (TC 2.A.2) family. As to quaternary structure, interacts with TYRP1. As to expression, expressed in mature melanocytes.

The protein localises to the melanosome membrane. It catalyses the reaction sucrose(out) + H(+)(out) = sucrose(in) + H(+)(in). The catalysed reaction is D-glucose(out) + H(+)(out) = D-glucose(in) + H(+)(in). In terms of biological role, proton-associated glucose and sucrose transporter. May be able to transport also fructose. Expressed at a late melanosome maturation stage where functions as proton/glucose exporter which increase lumenal pH by decreasing glycolysis. Regulates melanogenesis by maintaining melanosome neutralization that is initially initiated by transient OCA2 and required for a proper function of the tyrosinase TYR. The chain is Membrane-associated transporter protein from Homo sapiens (Human).